A 165-amino-acid chain; its full sequence is Putative BTB/POZ domain-containing protein At2g40440 (165 aa).

The region spanning 24-98 (VDVRLKAGDS…IYSDGSMLSA (75 aa)) is the BTB domain.

Its pathway is protein modification; protein ubiquitination. May act as a substrate-specific adapter of an E3 ubiquitin-protein ligase complex (CUL3-RBX1-BTB) which mediates the ubiquitination and subsequent proteasomal degradation of target proteins. In Arabidopsis thaliana (Mouse-ear cress), this protein is Putative BTB/POZ domain-containing protein At2g40440.